A 249-amino-acid polypeptide reads, in one-letter code: Sugar fermentation stimulation protein homolog (249 aa).

The protein belongs to the SfsA family.

In Rhizobium rhizogenes (strain K84 / ATCC BAA-868) (Agrobacterium radiobacter), this protein is Sugar fermentation stimulation protein homolog.